The primary structure comprises 137 residues: uncharacterized protein (137 aa).

The next 3 membrane-spanning stretches (helical) occupy residues 5–25 (ELLWPALITALATMLYLVLVI), 79–99 (IAAILGAVWLLGRILYAWGYY), and 109–129 (FALGSLSSMILVVGALLSILW).

This sequence belongs to the MAPEG family.

It is found in the cell membrane. This is an uncharacterized protein from Synechocystis sp. (strain ATCC 27184 / PCC 6803 / Kazusa).